The sequence spans 342 residues: Isopentenyl-diphosphate delta-isomerase (342 aa).

Position 11-12 (11-12) interacts with substrate; it reads RK. Residues Ser68, 69-71, Ser99, and Asn127 contribute to the FMN site; that span reads SMT. 99 to 101 lines the substrate pocket; sequence SMR. Glu163 lines the Mg(2+) pocket. Residues Lys194, Thr224, and 295 to 296 each bind FMN; that span reads AG.

It belongs to the IPP isomerase type 2 family. As to quaternary structure, homooctamer. Dimer of tetramers. FMN serves as cofactor. NADPH is required as a cofactor. It depends on Mg(2+) as a cofactor.

The protein localises to the cytoplasm. The enzyme catalyses isopentenyl diphosphate = dimethylallyl diphosphate. Involved in the biosynthesis of isoprenoids. Catalyzes the 1,3-allylic rearrangement of the homoallylic substrate isopentenyl (IPP) to its allylic isomer, dimethylallyl diphosphate (DMAPP). The protein is Isopentenyl-diphosphate delta-isomerase of Rickettsia prowazekii (strain Madrid E).